Here is a 212-residue protein sequence, read N- to C-terminus: Thymidylate kinase (212 aa).

10–17 (GLEGAGKT) lines the ATP pocket.

Belongs to the thymidylate kinase family.

It carries out the reaction dTMP + ATP = dTDP + ADP. Phosphorylation of dTMP to form dTDP in both de novo and salvage pathways of dTTP synthesis. The polypeptide is Thymidylate kinase (Yersinia pseudotuberculosis serotype O:3 (strain YPIII)).